A 228-amino-acid chain; its full sequence is Ribose-5-phosphate isomerase A (228 aa).

Residues 31–34 (TGST), 85–88 (DGAD), and 97–100 (KGGG) contribute to the substrate site. Residue Glu-106 is the Proton acceptor of the active site. Lys-124 provides a ligand contact to substrate.

This sequence belongs to the ribose 5-phosphate isomerase family. In terms of assembly, homodimer.

It carries out the reaction aldehydo-D-ribose 5-phosphate = D-ribulose 5-phosphate. The protein operates within carbohydrate degradation; pentose phosphate pathway; D-ribose 5-phosphate from D-ribulose 5-phosphate (non-oxidative stage): step 1/1. In terms of biological role, catalyzes the reversible conversion of ribose-5-phosphate to ribulose 5-phosphate. This chain is Ribose-5-phosphate isomerase A, found in Haloarcula marismortui (strain ATCC 43049 / DSM 3752 / JCM 8966 / VKM B-1809) (Halobacterium marismortui).